We begin with the raw amino-acid sequence, 730 residues long: Ribosomal RNA large subunit methyltransferase K/L (730 aa).

Residues 46–157 enclose the THUMP domain; that stretch reads TAYRLCLWSR…RGEAILSLDL (112 aa).

This sequence belongs to the methyltransferase superfamily. RlmKL family.

The protein localises to the cytoplasm. The catalysed reaction is guanosine(2445) in 23S rRNA + S-adenosyl-L-methionine = N(2)-methylguanosine(2445) in 23S rRNA + S-adenosyl-L-homocysteine + H(+). The enzyme catalyses guanosine(2069) in 23S rRNA + S-adenosyl-L-methionine = N(2)-methylguanosine(2069) in 23S rRNA + S-adenosyl-L-homocysteine + H(+). Specifically methylates the guanine in position 2445 (m2G2445) and the guanine in position 2069 (m7G2069) of 23S rRNA. This Pseudomonas putida (strain W619) protein is Ribosomal RNA large subunit methyltransferase K/L.